Here is a 202-residue protein sequence, read N- to C-terminus: Small ribosomal subunit protein uS5 (202 aa).

One can recognise an S5 DRBM domain in the interval 42–105; it reads LKDEVLKIMP…ILAKLSIVPV (64 aa). T192 is subject to Phosphothreonine.

It belongs to the universal ribosomal protein uS5 family. In terms of assembly, component of the small ribosomal subunit. Interacts with zinc finger protein ZNF277 (via zinc-finger domains); the interaction is direct; the interaction is extra-ribosomal. Interaction with ZNF277 competes with the binding of RPS2 to protein arginine methyltransferase PRMT3. Citrullinated by PADI4 in the Arg/Gly-rich region. Post-translationally, asymmetric arginine dimethylation by PRMT3 occurs at multiple sites in the Arg/Gly-rich region. In terms of processing, monoubiquitinated by RNF10 when a ribosome has stalled during translation, leading to its degradation by the proteasome. Deubiquitinated by USP10, preventing degradation by the proteasome and promoting 40S ribosome subunit recycling following ribosome dissociation.

It is found in the cytoplasm. The protein localises to the nucleus. The protein resides in the nucleolus. Component of the ribosome, a large ribonucleoprotein complex responsible for the synthesis of proteins in the cell. The small ribosomal subunit (SSU) binds messenger RNAs (mRNAs) and translates the encoded message by selecting cognate aminoacyl-transfer RNA (tRNA) molecules. The large subunit (LSU) contains the ribosomal catalytic site termed the peptidyl transferase center (PTC), which catalyzes the formation of peptide bonds, thereby polymerizing the amino acids delivered by tRNAs into a polypeptide chain. The nascent polypeptides leave the ribosome through a tunnel in the LSU and interact with protein factors that function in enzymatic processing, targeting, and the membrane insertion of nascent chains at the exit of the ribosomal tunnel. Plays a role in the assembly and function of the 40S ribosomal subunit. Mutations in this protein affects the control of translational fidelity. Involved in nucleolar processing of pre-18S ribosomal RNA and ribosome assembly. This Cricetulus griseus (Chinese hamster) protein is Small ribosomal subunit protein uS5 (RPS2).